Here is a 481-residue protein sequence, read N- to C-terminus: Rhamnogalacturonan I rhamnosyltransferase 4 (481 aa).

Residues 33-55 (VWFFRVCSCILVWTCLIQLFWHS) traverse the membrane as a helical; Signal-anchor for type II membrane protein segment. N-linked (GlcNAc...) asparagine glycans are attached at residues Asn-85 and Asn-118. Position 258–260 (258–260 (HLR)) interacts with substrate. 2 N-linked (GlcNAc...) asparagine glycosylation sites follow: Asn-372 and Asn-432.

Belongs to the glycosyltransferase GT106 family.

The protein localises to the golgi apparatus membrane. The enzyme catalyses alpha-D-galacturonosyl-[(1-&gt;2)-alpha-L-rhamnosyl-(1-&gt;4)-alpha-D-galacturonosyl](n) + UDP-beta-L-rhamnose = [(1-&gt;2)-alpha-L-rhamnosyl-(1-&gt;4)-alpha-D-galacturonosyl](n+1) + UDP + H(+). The protein operates within glycan metabolism; pectin biosynthesis. Glycosyltransferase involved in the formation of rhamnogalacturonan I (RG-I) oligosaccharides in the seed coat mucilage, which is a specialized cell wall with abundant RG-I. Transfers the rhamnose residue from UDP-beta-L-rhamnose to RG-I oligosaccharides. This is Rhamnogalacturonan I rhamnosyltransferase 4 from Arabidopsis thaliana (Mouse-ear cress).